Consider the following 729-residue polypeptide: Phosphoribosylformylglycinamidine synthase subunit PurL (729 aa).

Residue H54 is part of the active site. Residues Y57 and K96 each coordinate ATP. E98 contacts Mg(2+). Substrate contacts are provided by residues S99 to H102 and R121. The active-site Proton acceptor is the H100. Residue D122 coordinates Mg(2+). Position 245 (Q245) interacts with substrate. Residue D273 participates in Mg(2+) binding. Substrate is bound at residue E317–Q319. Positions 495 and 532 each coordinate ATP. A Mg(2+)-binding site is contributed by N533. S535 lines the substrate pocket.

This sequence belongs to the FGAMS family. In terms of assembly, monomer. Part of the FGAM synthase complex composed of 1 PurL, 1 PurQ and 2 PurS subunits.

Its subcellular location is the cytoplasm. It catalyses the reaction N(2)-formyl-N(1)-(5-phospho-beta-D-ribosyl)glycinamide + L-glutamine + ATP + H2O = 2-formamido-N(1)-(5-O-phospho-beta-D-ribosyl)acetamidine + L-glutamate + ADP + phosphate + H(+). Its pathway is purine metabolism; IMP biosynthesis via de novo pathway; 5-amino-1-(5-phospho-D-ribosyl)imidazole from N(2)-formyl-N(1)-(5-phospho-D-ribosyl)glycinamide: step 1/2. Its function is as follows. Part of the phosphoribosylformylglycinamidine synthase complex involved in the purines biosynthetic pathway. Catalyzes the ATP-dependent conversion of formylglycinamide ribonucleotide (FGAR) and glutamine to yield formylglycinamidine ribonucleotide (FGAM) and glutamate. The FGAM synthase complex is composed of three subunits. PurQ produces an ammonia molecule by converting glutamine to glutamate. PurL transfers the ammonia molecule to FGAR to form FGAM in an ATP-dependent manner. PurS interacts with PurQ and PurL and is thought to assist in the transfer of the ammonia molecule from PurQ to PurL. The protein is Phosphoribosylformylglycinamidine synthase subunit PurL of Staphylococcus carnosus (strain TM300).